The sequence spans 445 residues: Cytochrome b (445 aa).

The Cytoplasmic segment spans residues 2–49 (SGIPHDHYEPRTGIEKWLHSRLPIVALAYDTIMIPTPRNLNWMWIWGV). The helical transmembrane segment at 50–67 (VLAFCLVLQIVTGIVLAM) threads the bilayer. The Periplasmic portion of the chain corresponds to 68–94 (HYTPHVDLAFASVEHIMRNVNGGFMLR). The chain crosses the membrane as a helical span at residues 95–113 (YLHANGASLFFIAVYLHIF). Positions 97 and 111 each coordinate heme b. At 114-129 (RGLYYGSYKAPREVTW) the chain is on the cytoplasmic side. Residues 130–149 (IVGMLIYLAMMATAFMGYVL) traverse the membrane as a helical segment. The Periplasmic segment spans residues 150–193 (PWGQMSFWGATVITGLFGAIPGIGHSIQTWLLGGPAVDNATLNR). Residues 194–216 (FFSLHYLLPFVIAALVAIHIWAF) form a helical membrane-spanning segment. Positions 198 and 212 each coordinate heme b. Residues 217 to 252 (HSTGNNNPTGVEVRRTSKAEAQKDTVPFWPYFIIKD) lie on the Cytoplasmic side of the membrane. A helical membrane pass occupies residues 253–270 (VFALAVVLLVFFAIVGFM). Residues 271 to 329 (PNYLGHPDNYIEANPLSTPAHIVPEWYFLPFYAILRAFTADVWVVQIANFISFGIIDAK) lie on the Periplasmic side of the membrane. A helical membrane pass occupies residues 330 to 346 (FFGVLAMFGAILVMALV). Residues 347 to 364 (PWLDTSPVRSGRYRPMFK) are Cytoplasmic-facing. Residues 365 to 382 (IYFWLLAADFVILTWVGA) traverse the membrane as a helical segment. The Periplasmic portion of the chain corresponds to 383 to 388 (QQTTFP). Residues 389–408 (YDWISLIASAYWFAYFLVIL) traverse the membrane as a helical segment. Over 409-445 (PILGAIEKPVAPPATIEEDFNAHYSPATGGTKTVVAE) the chain is Cytoplasmic.

Belongs to the cytochrome b family. As to quaternary structure, the main subunits of complex b-c1 are: cytochrome b, cytochrome c1 and the Rieske protein. Requires heme b as cofactor.

Its subcellular location is the cell membrane. In terms of biological role, component of the ubiquinol-cytochrome c reductase complex (complex III or cytochrome b-c1 complex), which is a respiratory chain that generates an electrochemical potential coupled to ATP synthesis. The chain is Cytochrome b (petB) from Cereibacter sphaeroides (Rhodobacter sphaeroides).